The sequence spans 475 residues: Probable proline--tRNA ligase, mitochondrial (475 aa).

A mitochondrion-targeting transit peptide spans 1–29 (MEGLLTRCRALPALATCSRQLSGYVPCRF).

It belongs to the class-II aminoacyl-tRNA synthetase family.

The protein localises to the mitochondrion matrix. It catalyses the reaction tRNA(Pro) + L-proline + ATP = L-prolyl-tRNA(Pro) + AMP + diphosphate. Functionally, mitochondrial aminoacyl-tRNA synthetase that catalyzes the specific attachment of the proline amino acid (aa) to the homologous transfer RNA (tRNA), further participating in protein synthesis. The reaction occurs in a two steps: proline is first activated by ATP to form Pro-AMP and then transferred to the acceptor end of tRNA(Pro). The protein is Probable proline--tRNA ligase, mitochondrial of Homo sapiens (Human).